The following is a 101-amino-acid chain: Gamma-secretase subunit PEN-2 (101 aa).

At 1–17 (MNLERVSNEEKLNLCRK) the chain is on the cytoplasmic side. Positions 18–36 (YYLGGFAFLPFLWLVNIFW) form an intramembrane region, helical. The Cytoplasmic segment spans residues 37–57 (FFREAFLAPAYTEQSQIKGYV). Residues 58–78 (WRSAVGFLFWVIILATWITIF) form a helical membrane-spanning segment. Residues 79-101 (QIYRPRWGALGDYLSFTIPLGTP) lie on the Lumenal side of the membrane.

Belongs to the PEN-2 family. As to quaternary structure, the functional gamma-secretase complex is composed of at least four polypeptides: a presenilin homodimer (PSEN1 or PSEN2), nicastrin (NCSTN), APH1 (APH1A or APH1B) and PSENEN.

The protein resides in the endoplasmic reticulum membrane. The protein localises to the golgi apparatus. Its subcellular location is the golgi stack membrane. It localises to the cell membrane. It is found in the membrane. Its function is as follows. Essential subunit of the gamma-secretase complex, an endoprotease complex that catalyzes the intramembrane cleavage of integral membrane proteins such as Notch receptors and APP (amyloid-beta precursor protein). The gamma-secretase complex plays a role in Notch and Wnt signaling cascades and regulation of downstream processes via its role in processing key regulatory proteins, and by regulating cytosolic CTNNB1 levels. PSENEN modulates both endoproteolysis of presenilin and gamma-secretase activity. This is Gamma-secretase subunit PEN-2 (Psenen) from Mus musculus (Mouse).